The sequence spans 272 residues: MNNSEQLIALKESETAFLKYFNKADYELVDFSVVEKLDWKQLNHEDLQQMGERNFWQHEHQIYALRNDFTDQLLRYYSMYPTAATKVAYTGLIIRNNEAAVQVGLENYAPSLANVQQSLKLFIQFIQQQLRDNVHFVVLGHYQLLDALLDKSLQTPDILSMIEERNLSGLVTYLSTEHPIVQILKENTQQQLNVLEHYIPNDHPALVELKIWERWLHTQGYKDIHLDITAQPPRSYYTGLFIQCHFAENESRVLTGGYYKGSIEGFGLGLTL.

Belongs to the class-II aminoacyl-tRNA synthetase family. HisZ subfamily. In terms of assembly, heteromultimer composed of HisG and HisZ subunits.

It is found in the cytoplasm. It functions in the pathway amino-acid biosynthesis; L-histidine biosynthesis; L-histidine from 5-phospho-alpha-D-ribose 1-diphosphate: step 1/9. Required for the first step of histidine biosynthesis. May allow the feedback regulation of ATP phosphoribosyltransferase activity by histidine. This chain is ATP phosphoribosyltransferase regulatory subunit, found in Staphylococcus aureus (strain Mu3 / ATCC 700698).